Here is a 1196-residue protein sequence, read N- to C-terminus: Contactin rig-6 (1196 aa).

A signal peptide spans 1-19 (MMMLIRCISIFLLFGFVNA). 2 N-linked (GlcNAc...) asparagine glycosylation sites follow: Asn-100 and Asn-195. Ig-like C2-type domains are found at residues 144–225 (PQIS…ARNS) and 232–319 (PPIL…CSLS). Cystine bridges form between Cys-169–Cys-220 and Cys-263–Cys-316. Residue Asn-343 is glycosylated (N-linked (GlcNAc...) asparagine). Ig-like C2-type domains lie at 355–438 (PQIF…VKLR), 441–533 (PSIL…ALLT), 539–626 (PVFP…VQLI), and 631–730 (PSIK…EFVT). An intrachain disulfide couples Cys-372 to Cys-420. Asn-457 carries an N-linked (GlcNAc...) asparagine glycan. Intrachain disulfides connect Cys-462–Cys-517 and Cys-562–Cys-610. Asn-644 is a glycosylation site (N-linked (GlcNAc...) asparagine). Cys-653 and Cys-718 form a disulfide bridge. Fibronectin type-III domains are found at residues 736–844 (SPIA…TAPG), 849–961 (TIDN…SHGE), 963–1057 (KKVS…TKQH), and 1064–1168 (LIGK…LGSP). Asn-895, Asn-925, Asn-945, Asn-974, Asn-979, Asn-986, Asn-1002, and Asn-1092 each carry an N-linked (GlcNAc...) asparagine glycan. Residues 1174–1194 (TTGSSDVPIPSLLLLLLLLLW) form a helical membrane-spanning segment. Ser-1177 is lipidated: GPI-anchor amidated serine. The propeptide at 1178 to 1196 (SDVPIPSLLLLLLLLLWRL) is removed in mature form.

Belongs to the immunoglobulin superfamily. Contactin family. Interacts with sax-7; the interaction establishes synaptic connections between neurons. As to expression, expressed in neurons including the I1 and I3 pharyngeal interneurons, NSM and VNC motor neurons, HSN and CAN neurons, the ALM and PLM touch receptor neurons and other unidentified head neurons. Expressed in AVG interneurons. Also expressed in somatic muscles, the excretory canal, the excretory cell and the hypodermis.

It is found in the cell membrane. Its subcellular location is the perikaryon. The protein resides in the cell projection. The protein localises to the axon. It localises to the synapse. It is found in the cytoplasm. Functionally, probable cell adhesion protein involved in patterning of the nervous system, playing a role in ALM and PLM touch receptor axon growth and VNC axon navigation. By associating with the transmembrane protein sax-7, mediates axonal interactions to establish synaptic connections between the AVG interneuron and the two PHC sensory neurons. Also required for non-neuronal cell migration in the excretory canal, regulating excretory canal elongation and excretory cell morphogenesis. Plays a role in regulating male mating behavior. This Caenorhabditis elegans protein is Contactin rig-6.